Consider the following 147-residue polypeptide: ATP synthase epsilon chain 2 (147 aa).

The protein belongs to the ATPase epsilon chain family. As to quaternary structure, F-type ATPases have 2 components, CF(1) - the catalytic core - and CF(0) - the membrane proton channel. CF(1) has five subunits: alpha(3), beta(3), gamma(1), delta(1), epsilon(1). CF(0) has three main subunits: a, b and c.

It is found in the cell inner membrane. Its function is as follows. Produces ATP from ADP in the presence of a proton gradient across the membrane. The protein is ATP synthase epsilon chain 2 of Photobacterium profundum (strain SS9).